The following is a 229-amino-acid chain: GTP cyclohydrolase 1 (229 aa).

Zn(2+) is bound by residues Cys-116, His-119, and Cys-187.

It belongs to the GTP cyclohydrolase I family. In terms of assembly, toroid-shaped homodecamer, composed of two pentamers of five dimers.

The enzyme catalyses GTP + H2O = 7,8-dihydroneopterin 3'-triphosphate + formate + H(+). Its pathway is cofactor biosynthesis; 7,8-dihydroneopterin triphosphate biosynthesis; 7,8-dihydroneopterin triphosphate from GTP: step 1/1. The chain is GTP cyclohydrolase 1 from Synechococcus sp. (strain JA-3-3Ab) (Cyanobacteria bacterium Yellowstone A-Prime).